The sequence spans 443 residues: MIKERKTELVEGFRHSVPYINTHRGKTFVIMLGGEAIEHDNFSSIVSDIGLLHSLGIRLVVVYGARPQIDANLAAHHHEPIYHKNTRVTDAKALELVKQAAGLLQLDITARLSMSLNNTPLQGAHINVVSGNFTIAQPLGVDDGVDYCHSGRIRRIDEDAINRQLDNGAIVLMGPVAVSVTGESFNLTSEEIATQLAVKLKAEKMIGFCSSQGVTNSEGGIISELFPNEAQARVEELEAQGDYNSGTVRFLRGAVKACRSGVRRCHLISYQEDGSLLQELFSRDGIGTQIVMESAEQIRRATINDIGGILELIRPLEQQGILVRRSREQLEMEIDKFTIIQRDNMTIACAALYPFVEEKIGEMACVAVHPDYRSSSRGEVLLERVAAQARQMGLRKLFVLTTRSIHWFQERGFTPVDIELLPESKKKMYNYQRRSKVLMADLG.

An N-acetyltransferase domain is found at 296–443; sequence EQIRRATIND…RSKVLMADLG (148 aa).

The protein belongs to the acetyltransferase family. ArgA subfamily. As to quaternary structure, homohexamer.

It localises to the cytoplasm. The catalysed reaction is L-glutamate + acetyl-CoA = N-acetyl-L-glutamate + CoA + H(+). It participates in amino-acid biosynthesis; L-arginine biosynthesis; N(2)-acetyl-L-ornithine from L-glutamate: step 1/4. This Salmonella typhimurium (strain LT2 / SGSC1412 / ATCC 700720) protein is Amino-acid acetyltransferase (argA).